Here is a 360-residue protein sequence, read N- to C-terminus: Histidinol-phosphate aminotransferase (360 aa).

Lys224 is modified (N6-(pyridoxal phosphate)lysine).

Belongs to the class-II pyridoxal-phosphate-dependent aminotransferase family. Histidinol-phosphate aminotransferase subfamily. Pyridoxal 5'-phosphate serves as cofactor.

It carries out the reaction L-histidinol phosphate + 2-oxoglutarate = 3-(imidazol-4-yl)-2-oxopropyl phosphate + L-glutamate. The protein operates within amino-acid biosynthesis; L-histidine biosynthesis; L-histidine from 5-phospho-alpha-D-ribose 1-diphosphate: step 7/9. The chain is Histidinol-phosphate aminotransferase from Methanococcoides burtonii (strain DSM 6242 / NBRC 107633 / OCM 468 / ACE-M).